We begin with the raw amino-acid sequence, 131 residues long: Lysosomal enzyme trafficking factor (131 aa).

The next 2 helical transmembrane spans lie at 8 to 28 (MGWIGVSLYLFVSAAAFYYVF) and 66 to 86 (LPFWLWATLFLIPYFQVFLFL).

The protein belongs to the LYSET family.

The protein localises to the golgi apparatus membrane. Required for mannose-6-phosphate-dependent trafficking of lysosomal enzymes. LYSET bridges GlcNAc-1-phosphate transferase (GNPTAB), to the membrane-bound transcription factor site-1 protease (MBTPS1), thus allowing proteolytic activation of the GNPTAB. GNPTAB is involved in the regulation of M6P-dependent Golgi-to-lysosome trafficking of lysosomal enzymes. LYSET is thus an essential factor for maturation and delivery of lysosomal hydrolases. The sequence is that of Lysosomal enzyme trafficking factor (lyset-a) from Xenopus laevis (African clawed frog).